Consider the following 429-residue polypeptide: Ribosomal protein uS12 methylthiotransferase RimO (429 aa).

The region spanning 2–118 (HNIFLLSLGC…VLRAIGAEYR (117 aa)) is the MTTase N-terminal domain. [4Fe-4S] cluster-binding residues include C11, C47, C81, C142, C146, and C149. Residues 128 to 357 (LTPPHYAFLK…MELQETISQE (230 aa)) form the Radical SAM core domain. Residues 360 to 427 (REFEGNEIVV…PYDLEGEVIG (68 aa)) form the TRAM domain.

It belongs to the methylthiotransferase family. RimO subfamily. The cofactor is [4Fe-4S] cluster.

The protein localises to the cytoplasm. It carries out the reaction L-aspartate(89)-[ribosomal protein uS12]-hydrogen + (sulfur carrier)-SH + AH2 + 2 S-adenosyl-L-methionine = 3-methylsulfanyl-L-aspartate(89)-[ribosomal protein uS12]-hydrogen + (sulfur carrier)-H + 5'-deoxyadenosine + L-methionine + A + S-adenosyl-L-homocysteine + 2 H(+). Catalyzes the methylthiolation of an aspartic acid residue of ribosomal protein uS12. In Chlorobium limicola (strain DSM 245 / NBRC 103803 / 6330), this protein is Ribosomal protein uS12 methylthiotransferase RimO.